Here is a 702-residue protein sequence, read N- to C-terminus: MADS-box MEF2 type transcription factor MIG1 (702 aa).

Residues 1–61 (MGRRKIEIKA…KKLYEYSSGD (61 aa)) form the MADS-box domain. Disordered stretches follow at residues 73 to 608 (GGAT…NIDT) and 658 to 702 (PSFL…KVDS). Residues 86-96 (GGDDDDEEEGD) are compositionally biased toward acidic residues. Over residues 132–144 (ASPPIPNGVPFPP) the composition is skewed to pro residues. Over residues 145–155 (HGHGVPRGHTP) the composition is skewed to low complexity. Positions 180-195 (GSPQVNGFGFGQQQSM) are enriched in polar residues. A compositionally biased stretch (pro residues) spans 201–241 (TTMPPHMPPQMAPGPPFPYPQHPQHPPHPPHPPHPPHPQQP). Low complexity-rich tracts occupy residues 273 to 284 (PMGMQRHSVSPP), 326 to 343 (ESPQ…QQPE), and 350 to 371 (EQQQ…QSEP). Positions 456–465 (VDESTSNASE) are enriched in polar residues. Low complexity-rich tracts occupy residues 487-512 (RASI…SLRA) and 530-553 (DGSG…DATS). Residues 554 to 567 (QSTRQNDSHSSTNM) show a composition bias toward polar residues. Residues 587-600 (PPNPFAPKRPPQHP) are compositionally biased toward pro residues. A compositionally biased stretch (basic and acidic residues) spans 693-702 (NEPKRVKVDS).

The protein belongs to the MEF2 family. In terms of assembly, interacts with MAPK MPS1.

The protein resides in the nucleus. Functionally, transcription factor acting downstream of the MPS1 MAP kinase (MAPK) cascade during conidiation and plant infection. Required for overcoming plant defense responses and the differentiation of secondary infectious hyphae in live plant cells. The polypeptide is MADS-box MEF2 type transcription factor MIG1 (Pyricularia oryzae (strain 70-15 / ATCC MYA-4617 / FGSC 8958) (Rice blast fungus)).